Reading from the N-terminus, the 382-residue chain is Alcohol dehydrogenase 4 (382 aa).

Belongs to the iron-containing alcohol dehydrogenase family. In terms of assembly, homodimer. Zn(2+) serves as cofactor. It depends on Fe(2+) as a cofactor.

It is found in the mitochondrion. It catalyses the reaction a primary alcohol + NAD(+) = an aldehyde + NADH + H(+). The enzyme catalyses a secondary alcohol + NAD(+) = a ketone + NADH + H(+). Inhibited by EDTA. Its function is as follows. Reduces acetaldehyde to ethanol during glucose fermentation. Specific for ethanol. Shows drastically reduced activity towards primary alcohols from 4 carbon atoms upward. Isomers of aliphatic alcohol, as well as secondary alcohols and glycerol are not used at all. In Saccharomyces cerevisiae (strain YJM789) (Baker's yeast), this protein is Alcohol dehydrogenase 4 (ADH4).